Here is a 251-residue protein sequence, read N- to C-terminus: MEWSEPAIVLSVAAFGESDLRTIVLAETHGAWHGLARGGAGRRGAPIWQEGNLINARWVARLPEQLGSISGELVHPAAAIAMADPLALAVLRAACAVAAGALPEREAHRGAFIRLARLLGGIGIAGTALPALVRFELELLRELGYGLDLSSCALSGAAEDLAFVSPRTGRAVARGAAGDWVPRLLKLPAFLLDEDAADDKADLAACRDGLALTGHFLARDAFGARHAPLPTARLDLYDRLTRRLNGDDDAR.

It belongs to the RecO family.

Functionally, involved in DNA repair and RecF pathway recombination. This is DNA repair protein RecO from Acidiphilium cryptum (strain JF-5).